Here is a 659-residue protein sequence, read N- to C-terminus: ATP-binding cassette sub-family D member 3 (659 aa).

The interaction with PEX19 stretch occupies residues 1–61; it reads MAAFSKYLTA…GKKERAVVDK (61 aa). N12 is a glycosylation site (N-linked (GlcNAc...) asparagine). K61 is subject to N6-acetyllysine. Residues 84–104 traverse the membrane as a helical segment; sequence GYLLLIAVMLVSRTYCDVWMI. An ABC transmembrane type-1 domain is found at 85 to 372; that stretch reads YLLLIAVMLV…MLLRMSQALG (288 aa). The N-linked (GlcNAc...) asparagine glycan is linked to N106. The chain crosses the membrane as a helical span at residues 126–146; that stretch reads LFNFIAAMPLISLVNNFLKYG. An N-linked (GlcNAc...) asparagine glycan is attached at N206. A helical transmembrane segment spans residues 224–244; the sequence is AIGAQGPASMMAYLLVSGLFL. K260 is subject to N6-acetyllysine. Residues 313–333 form a helical membrane-spanning segment; that stretch reads MGFIDSIIAKYVATVVGYLVV. K399 bears the N6-acetyllysine mark. S424 is modified (phosphoserine). Residues 434 to 659 form the ABC transporter domain; that stretch reads INTDNIIKFD…ITEDTVEFGS (226 aa). 473 to 480 provides a ligand contact to ATP; the sequence is GPNGCGKS. At K533 the chain carries N6-acetyllysine. Phosphoserine is present on S659.

The protein belongs to the ABC transporter superfamily. ABCD family. Peroxisomal fatty acyl CoA transporter (TC 3.A.1.203) subfamily. In terms of assembly, homodimers. Can form heterodimers with ABCD1 and ABCD2. Dimerization is necessary to form an active transporter. Interacts with PEX19; mediates the targeting of ABCD3 to peroxisomes. Post-translationally, ubiquitinated by PEX2 during pexophagy in response to starvation, leading to its degradation.

The protein resides in the peroxisome membrane. The catalysed reaction is a very long-chain fatty acyl-CoA + H2O = a very long-chain fatty acid + CoA + H(+). It catalyses the reaction a very long-chain fatty acid(in) + ATP + H2O = a very long-chain fatty acid(out) + ADP + phosphate + H(+). It carries out the reaction a long-chain fatty acyl-CoA + H2O = a long-chain fatty acid + CoA + H(+). The enzyme catalyses a long-chain fatty acid(in) + ATP + H2O = a long-chain fatty acid(out) + ADP + phosphate + H(+). The catalysed reaction is pristanoyl-CoA + H2O = 2,6,10,14-tetramethylpentadecanoate + CoA + H(+). It catalyses the reaction 2,6,10,14-tetramethylpentadecanoate(in) + ATP + H2O = 2,6,10,14-tetramethylpentadecanoate(out) + ADP + phosphate + H(+). It carries out the reaction hexadecanedioyl-CoA + H2O = hexadecanedioate + CoA + H(+). The enzyme catalyses hexadecanedioate(in) + ATP + H2O = hexadecanedioate(out) + ADP + phosphate + H(+). The catalysed reaction is (5Z,8Z,11Z,14Z,17Z)-eicosapentaenoyl-CoA + H2O = (5Z,8Z,11Z,14Z,17Z)-eicosapentaenoate + CoA + H(+). It catalyses the reaction (5Z,8Z,11Z,14Z,17Z)-eicosapentaenoate(in) + ATP + H2O = (5Z,8Z,11Z,14Z,17Z)-eicosapentaenoate(out) + ADP + phosphate + H(+). It carries out the reaction (4Z,7Z,10Z,13Z,16Z,19Z)-docosahexaenoyl-CoA + H2O = (4Z,7Z,10Z,13Z,16Z,19Z)-docosahexaenoate + CoA + H(+). The enzyme catalyses (4Z,7Z,10Z,13Z,16Z,19Z)-docosahexaenoate(in) + ATP + H2O = (4Z,7Z,10Z,13Z,16Z,19Z)-docosahexaenoate(out) + ADP + phosphate + H(+). Broad substrate specificity ATP-dependent transporter of the ATP-binding cassette (ABC) family that catalyzes the transport of long-chain fatty acids (LCFA)-CoA, dicarboxylic acids-CoA, long-branched-chain fatty acids-CoA and bile acids from the cytosol to the peroxisome lumen for beta-oxydation. Has fatty acyl-CoA thioesterase and ATPase activities. Probably hydrolyzes fatty acyl-CoAs into free fatty acids prior to their ATP-dependent transport into peroxisomes. Thus, play a role in regulation of LCFAs and energy metabolism namely, in the degradation and biosynthesis of fatty acids by beta-oxidation. In Mus musculus (Mouse), this protein is ATP-binding cassette sub-family D member 3 (Abcd3).